The sequence spans 356 residues: DNA integrity scanning protein DisA (356 aa).

The 141-residue stretch at 7–147 (NKNMLYALKM…EKYVVEDISK (141 aa)) folds into the DAC domain. ATP-binding positions include glycine 74, leucine 92, and 105–109 (TRHRT).

The protein belongs to the DisA family. Homooctamer. Mg(2+) serves as cofactor.

The enzyme catalyses 2 ATP = 3',3'-c-di-AMP + 2 diphosphate. Participates in a DNA-damage check-point that is active prior to asymmetric division when DNA is damaged. DisA forms globular foci that rapidly scan along the chromosomes during sporulation, searching for lesions. When a lesion is present, DisA pauses at the lesion site. This triggers a cellular response that culminates in a temporary block in sporulation initiation. In terms of biological role, also has diadenylate cyclase activity, catalyzing the condensation of 2 ATP molecules into cyclic di-AMP (c-di-AMP). c-di-AMP acts as a signaling molecule that couples DNA integrity with progression of sporulation. The rise in c-di-AMP level generated by DisA while scanning the chromosome, operates as a positive signal that advances sporulation; upon encountering a lesion, the DisA focus arrests at the damaged site and halts c-di-AMP synthesis. The polypeptide is DNA integrity scanning protein DisA (Clostridioides difficile (strain 630) (Peptoclostridium difficile)).